The sequence spans 469 residues: RuvB-like helicase 2 (469 aa).

74–81 (GPPSTGKT) contacts ATP.

Belongs to the RuvB family. May form heterododecamers with RVB1. Component of the SWR1 chromatin remodeling complex, the INO80 chromatin remodeling complex, and of the R2TP complex.

The protein resides in the nucleus. It carries out the reaction ATP + H2O = ADP + phosphate + H(+). Its function is as follows. DNA helicase which participates in several chromatin remodeling complexes, including the SWR1 and the INO80 complexes. The SWR1 complex mediates the ATP-dependent exchange of histone H2A for the H2A variant HZT1 leading to transcriptional regulation of selected genes by chromatin remodeling. The INO80 complex remodels chromatin by shifting nucleosomes and is involved in DNA repair. Also involved in pre-rRNA processing. This chain is RuvB-like helicase 2 (RVB2), found in Eremothecium gossypii (strain ATCC 10895 / CBS 109.51 / FGSC 9923 / NRRL Y-1056) (Yeast).